A 154-amino-acid chain; its full sequence is ATP synthase subunit b (154 aa).

Residues 5–27 (LLGQAIAFTLFVWFCMKYVWPPI) form a helical membrane-spanning segment.

The protein belongs to the ATPase B chain family. As to quaternary structure, F-type ATPases have 2 components, F(1) - the catalytic core - and F(0) - the membrane proton channel. F(1) has five subunits: alpha(3), beta(3), gamma(1), delta(1), epsilon(1). F(0) has three main subunits: a(1), b(2) and c(10-14). The alpha and beta chains form an alternating ring which encloses part of the gamma chain. F(1) is attached to F(0) by a central stalk formed by the gamma and epsilon chains, while a peripheral stalk is formed by the delta and b chains.

It localises to the cell inner membrane. Its function is as follows. F(1)F(0) ATP synthase produces ATP from ADP in the presence of a proton or sodium gradient. F-type ATPases consist of two structural domains, F(1) containing the extramembraneous catalytic core and F(0) containing the membrane proton channel, linked together by a central stalk and a peripheral stalk. During catalysis, ATP synthesis in the catalytic domain of F(1) is coupled via a rotary mechanism of the central stalk subunits to proton translocation. In terms of biological role, component of the F(0) channel, it forms part of the peripheral stalk, linking F(1) to F(0). This Aliivibrio fischeri (strain ATCC 700601 / ES114) (Vibrio fischeri) protein is ATP synthase subunit b.